A 75-amino-acid polypeptide reads, in one-letter code: uncharacterized protein (75 aa).

This is an uncharacterized protein from Acidithiobacillus ferridurans.